A 183-amino-acid chain; its full sequence is Holliday junction branch migration complex subunit RuvA (183 aa).

The domain I stretch occupies residues methionine 1–leucine 63. A domain II region spans residues glutamate 64–alanine 139. A region of interest (flexible linker) is located at residue alanine 139. Residues alanine 139–serine 183 form a domain III region.

It belongs to the RuvA family. Homotetramer. Forms an RuvA(8)-RuvB(12)-Holliday junction (HJ) complex. HJ DNA is sandwiched between 2 RuvA tetramers; dsDNA enters through RuvA and exits via RuvB. An RuvB hexamer assembles on each DNA strand where it exits the tetramer. Each RuvB hexamer is contacted by two RuvA subunits (via domain III) on 2 adjacent RuvB subunits; this complex drives branch migration. In the full resolvosome a probable DNA-RuvA(4)-RuvB(12)-RuvC(2) complex forms which resolves the HJ.

Its subcellular location is the cytoplasm. The RuvA-RuvB-RuvC complex processes Holliday junction (HJ) DNA during genetic recombination and DNA repair, while the RuvA-RuvB complex plays an important role in the rescue of blocked DNA replication forks via replication fork reversal (RFR). RuvA specifically binds to HJ cruciform DNA, conferring on it an open structure. The RuvB hexamer acts as an ATP-dependent pump, pulling dsDNA into and through the RuvAB complex. HJ branch migration allows RuvC to scan DNA until it finds its consensus sequence, where it cleaves and resolves the cruciform DNA. The polypeptide is Holliday junction branch migration complex subunit RuvA (Helicobacter pylori (strain HPAG1)).